Here is a 379-residue protein sequence, read N- to C-terminus: Type II methyltransferase M.CvrRI (379 aa).

It belongs to the N(4)/N(6)-methyltransferase family.

The enzyme catalyses a 2'-deoxyadenosine in DNA + S-adenosyl-L-methionine = an N(6)-methyl-2'-deoxyadenosine in DNA + S-adenosyl-L-homocysteine + H(+). In terms of biological role, a gamma subtype methylase, recognizes the double-stranded sequence 5'-TGCA-3', methylates A-4 on both strands, and protects the DNA from cleavage by the CviRI endonuclease. The chain is Type II methyltransferase M.CvrRI (CVIRIM) from Chlorella (PBCV-XZ-6E).